A 258-amino-acid polypeptide reads, in one-letter code: Shikimate dehydrogenase (NADP(+)) (258 aa).

Shikimate contacts are provided by residues 14–16 (SES) and Thr-61. Lys-65 acts as the Proton acceptor in catalysis. Shikimate is bound by residues Asn-86 and Asp-101. Residues 125 to 129 (GSGGS) and Leu-211 each bind NADP(+). Tyr-213 is a binding site for shikimate. Gly-234 serves as a coordination point for NADP(+).

This sequence belongs to the shikimate dehydrogenase family. In terms of assembly, homodimer.

The enzyme catalyses shikimate + NADP(+) = 3-dehydroshikimate + NADPH + H(+). The protein operates within metabolic intermediate biosynthesis; chorismate biosynthesis; chorismate from D-erythrose 4-phosphate and phosphoenolpyruvate: step 4/7. Its function is as follows. Involved in the biosynthesis of the chorismate, which leads to the biosynthesis of aromatic amino acids. Catalyzes the reversible NADPH linked reduction of 3-dehydroshikimate (DHSA) to yield shikimate (SA). This is Shikimate dehydrogenase (NADP(+)) from Clostridium botulinum (strain 657 / Type Ba4).